The following is a 1356-amino-acid chain: Tenascin-R (1356 aa).

The first 31 residues, M1–C31, serve as a signal peptide directing secretion. N-linked (GlcNAc...) asparagine glycosylation occurs at N55. The stretch at C127 to T157 forms a coiled coil. S176 is a glycosylation site (O-linked (Xyl...) (chondroitin sulfate) serine). N-linked (GlcNAc...) asparagine glycosylation is found at N180 and N198. 3 EGF-like domains span residues C188–C199, C204–C230, and C235–C261. A glycan (O-linked (Xyl...) (chondroitin sulfate) serine) is linked at S271. N278 carries an N-linked (GlcNAc...) asparagine glycan. EGF-like domains follow at residues C281–C292 and S293–S324. Intrachain disulfides connect C297–C307 and C314–C323. S302 carries O-linked (Xyl...) (chondroitin sulfate) serine glycosylation. Fibronectin type-III domains are found at residues P328–G419, L420–D504, G505–P596, K597–D686, S687–I776, S777–D864, P865–S953, P954–D1040, and P1041–V1129. N-linked (GlcNAc...) asparagine glycans are attached at residues N391, N469, and N580. S723 is subject to Phosphoserine. N-linked (GlcNAc...) asparagine glycosylation is found at N790, N868, N873, N1034, N1044, and N1259. Residues G1127–I1342 form the Fibrinogen C-terminal domain.

This sequence belongs to the tenascin family. As to quaternary structure, forms oligomers. Interacts with TNC and FN1. Interacts with BCAN and ACAN in a calcium -dependent manner. Interacts with CNTN1, SCN2B, PTPRZ1, and CSPG3. In terms of processing, contains N-linked oligosaccharides, O-linked sialylated structures. Contains O-linked chondroitin sulfate glycosaminoglycans. Contains N-linked oligosaccharides with a sulfated carbohydrate structure type GalNAc-4-SO4 or HNK-1 (SO4-3-GlcUABeta1,3GalBeta1,4GlcNAc). The levels of HNK-1 rise and fall in parallel to those of TNR during postnatal development of the cerebellum. In contrast, levels of GalNAc-4-SO4 are regulated independently from those of TNR, rising late in cerebellar development and continuing into adulthood. Early in postnatal development, GalNAc-4-SO4 is found predominantly on isoform 1, whereas in the adult it is predominantly on isoform 2. Brain-specific. Expressed in oligodendrocytes and small subsets of neurons (mainly interneurons and motoneurons) of the cerebellum, hippocampus and olfactory bulb. Expressed in dorsal root ganglia.

The protein localises to the secreted. It localises to the extracellular space. The protein resides in the extracellular matrix. Functionally, neural extracellular matrix (ECM) protein involved in interactions with different cells and matrix components. Theses interactions can influence cellular behavior by either evoking a stable adhesion and differentiation, or repulsion and inhibition of neurite growth. Binding to cell surface gangliosides inhibits RGD-dependent integrin-mediated cell adhesion and results in an inhibition of PTK2/FAK1 (FAK) phosphorylation and cell detachment. Binding to membrane surface sulfatides results in a oligodendrocyte adhesion and differentiation. Interaction with CNTN1 induces a repulsion of neurons and an inhibition of neurite outgrowth. Interacts with SCN2B may play a crucial role in clustering and regulation of activity of sodium channels at nodes of Ranvier. TNR-linked chondroitin sulfate glycosaminoglycans are involved in the interaction with FN1 and mediates inhibition of cell adhesion and neurite outgrowth. The highly regulated addition of sulfated carbohydrate structure may modulate the adhesive properties of TNR over the course of development and during synapse maintenance. The protein is Tenascin-R (Tnr) of Rattus norvegicus (Rat).